We begin with the raw amino-acid sequence, 98 residues long: NADH-ubiquinone oxidoreductase chain 4L (98 aa).

A run of 3 helical transmembrane segments spans residues 1-21 (MSLV…GLLM), 29-49 (SLLC…LMIL), and 61-81 (IILL…LVMV).

Belongs to the complex I subunit 4L family. In terms of assembly, core subunit of respiratory chain NADH dehydrogenase (Complex I) which is composed of 45 different subunits.

Its subcellular location is the mitochondrion inner membrane. It carries out the reaction a ubiquinone + NADH + 5 H(+)(in) = a ubiquinol + NAD(+) + 4 H(+)(out). Core subunit of the mitochondrial membrane respiratory chain NADH dehydrogenase (Complex I) which catalyzes electron transfer from NADH through the respiratory chain, using ubiquinone as an electron acceptor. Part of the enzyme membrane arm which is embedded in the lipid bilayer and involved in proton translocation. This chain is NADH-ubiquinone oxidoreductase chain 4L (MT-ND4L), found in Capra hircus (Goat).